Here is a 669-residue protein sequence, read N- to C-terminus: Sodium-dependent phosphate transporter (669 aa).

Residues 1–6 are Extracellular-facing; sequence MVTGPD. Residues 7 to 27 form a helical membrane-spanning segment; the sequence is MLWLVITSGIACFFMAFVTGA. Over 28-47 the chain is Cytoplasmic; the sequence is NDIANTFSTSIGSKAISIKK. Residues 48–68 form a helical membrane-spanning segment; the sequence is ALIVAFFFEALGASLLGGTVT. Residues 69 to 86 are Extracellular-facing; it reads DSIRSKIINFQVFYDTPE. Residues 87-107 traverse the membrane as a helical segment; the sequence is FLMLGMCCALMGATVWLAVAT. A topological domain (cytoplasmic) is located at residue arginine 108. A helical membrane pass occupies residues 109–129; that stretch reads AGLPVSTTHSIIGALLGFGLA. The Extracellular segment spans residues 130-143; it reads TGNMKSIKWEKINN. A helical membrane pass occupies residues 144–164; that stretch reads IVISWLAAPILAGTCSAIAFT. The Cytoplasmic portion of the chain corresponds to 165-186; it reads VLRMLILRKKNSFEIIKKMYWF. Residues 187–207 form a helical membrane-spanning segment; it reads LIFLITLPFSVFLIFHNPIVI. Topologically, residues 208–239 are extracellular; the sequence is NTQCKMKKDGKVIVSSPCYIEDWSAAHSFYAS. The chain crosses the membrane as a helical span at residues 240–260; the sequence is IICILLSSLLTAIGSFVIYII. The Cytoplasmic segment spans residues 261 to 502; that stretch reads YNKRINNYNL…YNNGIRGKIK (242 aa). The segment covering 311–335 has biased composition (polar residues); it reads AHNNTSNGTKQNQVGNGTKSNNNNV. Disordered regions lie at residues 311 to 364 and 392 to 444; these read AHNN…SVEA and TNMN…KNME. Over residues 342 to 352 the composition is skewed to basic and acidic residues; it reads KNVKSQQDDSK. A compositionally biased stretch (low complexity) spans 395 to 433; sequence NENNNNSNKNNNSNKNNNSNKNNNSNKNNNSNNGNSNEG. A helical transmembrane segment spans residues 503 to 523; it reads VQWYILLFGGLSMSLGLSIMG. Over 524–542 the chain is Extracellular; sequence YRVIKTVGMKLIKITPARG. Residues 543 to 563 traverse the membrane as a helical segment; the sequence is FTIELISGLVVLFFSICGIPL. Residues 564–632 lie on the Cytoplasmic side of the membrane; it reads SSTHCAVSSV…TSCVNLRLFR (69 aa). The helical transmembrane segment at 633-653 threads the bilayer; it reads TVFLSWILTVVFSATVTAGIY. The Extracellular portion of the chain corresponds to 654-669; that stretch reads SFAAYSPSYIMKMQTV.

Belongs to the inorganic phosphate transporter (PiT) (TC 2.A.20) family.

Its subcellular location is the cell membrane. It catalyses the reaction 2 Na(+)(out) + phosphate(out) = 2 Na(+)(in) + phosphate(in). Its function is as follows. Sodium-phosphate symporter which preferentially transports the monovalent form of phosphate with a stoichiometry of two sodium ions per phosphate ion. In Plasmodium falciparum, this protein is Sodium-dependent phosphate transporter.